The primary structure comprises 182 residues: MTELVNITELLLSRIRDVRDYPEPGVVFKDITPLLADPAAFTALTGALAELTVRHGATKIVGLEARGFILGAPAAVQAGVGFIPVRKAGKLPGATLSQSYDLEYGSAEIEVHAEDLVAGDRVMVVDDVLATGGTAEASLQLIRRAGAEVAGVSVLMELGFLGGRARLEPALAGAPLEALLQI.

The protein belongs to the purine/pyrimidine phosphoribosyltransferase family. In terms of assembly, homodimer.

The protein localises to the cytoplasm. It catalyses the reaction AMP + diphosphate = 5-phospho-alpha-D-ribose 1-diphosphate + adenine. It participates in purine metabolism; AMP biosynthesis via salvage pathway; AMP from adenine: step 1/1. Its function is as follows. Catalyzes a salvage reaction resulting in the formation of AMP, that is energically less costly than de novo synthesis. This Streptomyces avermitilis (strain ATCC 31267 / DSM 46492 / JCM 5070 / NBRC 14893 / NCIMB 12804 / NRRL 8165 / MA-4680) protein is Adenine phosphoribosyltransferase.